A 185-amino-acid chain; its full sequence is Elongation factor P (185 aa).

This sequence belongs to the elongation factor P family.

The protein localises to the cytoplasm. The protein operates within protein biosynthesis; polypeptide chain elongation. Involved in peptide bond synthesis. Stimulates efficient translation and peptide-bond synthesis on native or reconstituted 70S ribosomes in vitro. Probably functions indirectly by altering the affinity of the ribosome for aminoacyl-tRNA, thus increasing their reactivity as acceptors for peptidyl transferase. The chain is Elongation factor P from Desulfitobacterium hafniense (strain DSM 10664 / DCB-2).